Here is a 303-residue protein sequence, read N- to C-terminus: GTPase Era (303 aa).

The region spanning 8–176 (YCGFIAIVGR…ASIVRKHMPE (169 aa)) is the Era-type G domain. Residues 16–23 (GRPNVGKS) form a G1 region. GTP is bound at residue 16–23 (GRPNVGKS). Residues 42 to 46 (QTTRH) form a G2 region. A G3 region spans residues 63-66 (DTPG). GTP is bound by residues 63-67 (DTPGL) and 125-128 (NKVD). Positions 125–128 (NKVD) are G4. Residues 155-157 (ISA) form a G5 region. A KH type-2 domain is found at 207-284 (LGEELPYSVT…HLELWVKVKS (78 aa)).

This sequence belongs to the TRAFAC class TrmE-Era-EngA-EngB-Septin-like GTPase superfamily. Era GTPase family. As to quaternary structure, monomer.

Its subcellular location is the cytoplasm. The protein resides in the cell inner membrane. An essential GTPase that binds both GDP and GTP, with rapid nucleotide exchange. Plays a role in 16S rRNA processing and 30S ribosomal subunit biogenesis and possibly also in cell cycle regulation and energy metabolism. This Yersinia pseudotuberculosis serotype O:1b (strain IP 31758) protein is GTPase Era.